The primary structure comprises 245 residues: Ribonuclease 3 (245 aa).

The RNase III domain maps to 19-144 (ASILEERTGH…LIATIYLDGG (126 aa)). Residue Glu57 participates in Mg(2+) binding. Residue Asp61 is part of the active site. Asp130 and Glu133 together coordinate Mg(2+). The active site involves Glu133. A DRBM domain is found at 169–238 (DAKTELQEWA…AEAMLYREGV (70 aa)).

The protein belongs to the ribonuclease III family. Homodimer. It depends on Mg(2+) as a cofactor.

It localises to the cytoplasm. It carries out the reaction Endonucleolytic cleavage to 5'-phosphomonoester.. Functionally, digests double-stranded RNA. Involved in the processing of primary rRNA transcript to yield the immediate precursors to the large and small rRNAs (23S and 16S). Processes some mRNAs, and tRNAs when they are encoded in the rRNA operon. Processes pre-crRNA and tracrRNA of type II CRISPR loci if present in the organism. The polypeptide is Ribonuclease 3 (Brucella abortus (strain S19)).